A 553-amino-acid polypeptide reads, in one-letter code: Flagellar hook-associated protein 1 (553 aa).

It belongs to the flagella basal body rod proteins family.

It is found in the secreted. Its subcellular location is the bacterial flagellum. In Salmonella typhi, this protein is Flagellar hook-associated protein 1 (flgK).